Here is a 462-residue protein sequence, read N- to C-terminus: Alkaline ceramidase TOD1 (462 aa).

The Cytoplasmic portion of the chain corresponds to 1–18 (MGKFITTTLSPPLYARSK). A helical transmembrane segment spans residues 19 to 39 (LLCFSLLYLFSTIFLFLYVSL). The Lumenal segment spans residues 40 to 462 (SRNQCIFRYS…CKNYLTDMWG (423 aa)). N121, N132, and N449 each carry an N-linked (GlcNAc...) asparagine glycan.

Belongs to the alkaline ceramidase family. As to expression, preferentially expressed in pollen grains, pollen tubes and silique guard cells, but barely detectable in roots, stems and leaves.

It localises to the golgi apparatus membrane. The enzyme catalyses an N-acylsphing-4-enine + H2O = sphing-4-enine + a fatty acid. The protein operates within lipid metabolism. Its function is as follows. Endoplasmic reticulum ceramidase that catalyzes the hydrolysis of ceramides into sphingosine and free fatty acids at alkaline pH (e.g. pH 9.5). Inactive on phytoceramide. Involved in the regulation of turgor pressure in guard cells and pollen tubes. This is Alkaline ceramidase TOD1 from Arabidopsis thaliana (Mouse-ear cress).